Reading from the N-terminus, the 168-residue chain is Protein-export protein SecB (168 aa).

It belongs to the SecB family. In terms of assembly, homotetramer, a dimer of dimers. One homotetramer interacts with 1 SecA dimer.

The protein resides in the cytoplasm. In terms of biological role, one of the proteins required for the normal export of preproteins out of the cell cytoplasm. It is a molecular chaperone that binds to a subset of precursor proteins, maintaining them in a translocation-competent state. It also specifically binds to its receptor SecA. This is Protein-export protein SecB from Rhizobium meliloti (strain 1021) (Ensifer meliloti).